The following is a 1031-amino-acid chain: Translation initiation factor IF-2 (1031 aa).

2 disordered regions span residues 33–369 (KSHS…GDVL) and 388–436 (LKPL…AESL). The segment covering 45 to 56 (ELVRSKLSEPRV) has biased composition (basic and acidic residues). Residues 96-105 (PAPAQQQAAA) are compositionally biased toward low complexity. Residues 108 to 123 (ASSSKPSPQRPDQLSS) show a composition bias toward polar residues. Positions 148-171 (PAAQEPQPAAASTRPEAAAKAGSP) are enriched in low complexity. The span at 184-200 (VLPPPRRAASGPEPPQR) shows a compositional bias: pro residues. Residues 250 to 281 (TRPEPRSPVAKKEESSDSGKADEAPRPQRRLE) show a composition bias toward basic and acidic residues. Over residues 286–299 (PTRPVAKPLPPEPD) the composition is skewed to pro residues. Low complexity predominate over residues 419–435 (RPSASAEATAPEAAAES). Residues 522 to 695 (PRPPVVTIMG…LLVADVAELQ (174 aa)) form the tr-type G domain. Residues 531–538 (GHVDHGKT) are G1. 531 to 538 (GHVDHGKT) contacts GTP. The interval 556 to 560 (GITQR) is G2. The interval 581-584 (DTPG) is G3. Residues 581-585 (DTPGH) and 635-638 (NKID) each bind GTP. Residues 635–638 (NKID) are G4. Positions 671 to 673 (SAL) are G5.

The protein belongs to the TRAFAC class translation factor GTPase superfamily. Classic translation factor GTPase family. IF-2 subfamily.

Its subcellular location is the cytoplasm. One of the essential components for the initiation of protein synthesis. Protects formylmethionyl-tRNA from spontaneous hydrolysis and promotes its binding to the 30S ribosomal subunits. Also involved in the hydrolysis of GTP during the formation of the 70S ribosomal complex. In Synechococcus sp. (strain JA-3-3Ab) (Cyanobacteria bacterium Yellowstone A-Prime), this protein is Translation initiation factor IF-2.